We begin with the raw amino-acid sequence, 61 residues long: Large ribosomal subunit protein uL29 (61 aa).

It belongs to the universal ribosomal protein uL29 family.

This is Large ribosomal subunit protein uL29 from Stenotrophomonas maltophilia (strain K279a).